We begin with the raw amino-acid sequence, 233 residues long: uncharacterized protein (233 aa).

3 consecutive transmembrane segments (helical) span residues 4-24, 35-55, and 66-86; these read LAILLSILAIGLILLIINHDT, FGQLVSLGAIATLIGAGILQS, and IAIWLFVVLALVSAYVYRFEL.

It is found in the cell membrane. This is an uncharacterized protein from Sinorhizobium sp.